Here is a 447-residue protein sequence, read N- to C-terminus: Phosphoglucosamine mutase (447 aa).

Ser101 functions as the Phosphoserine intermediate in the catalytic mechanism. Ser101, Asp242, Asp244, and Asp246 together coordinate Mg(2+). Ser101 carries the post-translational modification Phosphoserine.

The protein belongs to the phosphohexose mutase family. It depends on Mg(2+) as a cofactor. Post-translationally, activated by phosphorylation.

The catalysed reaction is alpha-D-glucosamine 1-phosphate = D-glucosamine 6-phosphate. Its function is as follows. Catalyzes the conversion of glucosamine-6-phosphate to glucosamine-1-phosphate. The sequence is that of Phosphoglucosamine mutase from Methylobacterium radiotolerans (strain ATCC 27329 / DSM 1819 / JCM 2831 / NBRC 15690 / NCIMB 10815 / 0-1).